The chain runs to 184 residues: Large ribosomal subunit protein uL15 (184 aa).

The interval M1–E50 is disordered. Residues R21 to N35 show a composition bias toward gly residues.

This sequence belongs to the universal ribosomal protein uL15 family. Part of the 50S ribosomal subunit.

Its function is as follows. Binds to the 23S rRNA. This Chlorobium luteolum (strain DSM 273 / BCRC 81028 / 2530) (Pelodictyon luteolum) protein is Large ribosomal subunit protein uL15.